The chain runs to 185 residues: MINEIKKDAQERMDKSVEALKSQINKVRTGRASPNLLDGIVVEYYGAPTPLNQVANVVAEDGRTLAITVFDRTLAPAVEKAIMASDLGLNPSSAGAIIRVPLPPLTEERRKDLIKVVRGDAEQGRVSIRNIRRDANDKIKALLKDKEISEDDERRSQDEIQKLTDMFIKKIDEALTLKEAELMEF.

Belongs to the RRF family.

The protein resides in the cytoplasm. Functionally, responsible for the release of ribosomes from messenger RNA at the termination of protein biosynthesis. May increase the efficiency of translation by recycling ribosomes from one round of translation to another. This is Ribosome-recycling factor from Proteus mirabilis (strain HI4320).